We begin with the raw amino-acid sequence, 498 residues long: MASQGTKRSYEQMETGGERQDATEIRASVGRMIGGIGRFYIQMCTELKLSDYEGRLIQNSITIERMVLSAFDERRNKYLEEHPSAGKDPKKTGGPIYKRIDGKWMRELILYDKEEIRRVWRQANNGEDATAGLTHIMIWHSNLNDATYQRTRALVRTGMDPRMCSLMQGSTLPRRSGAAGAAVKGVGTIAMELIGMIKRGINDRNFWRGENGRRTRIAYERMCNILKGKFQTAAQRAMMDQVRESRNPGNAEIEDLIFLARSALILRGSVAHKSCLPACVYGLAVASGHDFEREGYSLVGIDPFKLLQNSQVFSLIRPNENPAHKSQLVWMACHSAAFEDLRVSGFIRGKKVVPRGRLSTRGVQIASNENVEAMDSSTLELRSRYWAIRTRSGGNTNQQKASADQISVQPTFSVQRNLPFERATVMAAFIGDNEGRTSDMRTEIIRMMESAKPEDLSFQGRGVFELSDEKATNPIVPSFDMNNEGSYFFGDNAEEYDN.

The Unconventional nuclear localization signal signature appears at 1–18; the sequence is MASQGTKRSYEQMETGGE. Residues 1-22 are disordered; the sequence is MASQGTKRSYEQMETGGERQDA. Residues 8-22 are compositionally biased toward basic and acidic residues; that stretch reads RSYEQMETGGERQDA. The short motif at 198–216 is the Bipartite nuclear localization signal element; it reads KRGINDRNFWRGENGRRTR.

Belongs to the influenza viruses nucleoprotein family. Homomultimerizes to form the nucleocapsid. May bind host exportin-1/XPO1. Binds to viral genomic RNA. Protein-RNA contacts are mediated by a combination of electrostatic interactions between positively charged residues and the phosphate backbone and planar interactions between aromatic side chains and bases. Late in virus-infected cells, may be cleaved from a 56-kDa protein to a 53-kDa protein by a cellular caspase. This cleavage might be a marker for the onset of apoptosis in infected cells or have a specific function in virus host interaction.

It is found in the virion. Its subcellular location is the host nucleus. In terms of biological role, encapsidates the negative strand viral RNA, protecting it from nucleases. The encapsidated genomic RNA is termed the ribonucleoprotein (RNP) and serves as template for transcription and replication. The RNP needs to be localized in the host nucleus to start an infectious cycle, but is too large to diffuse through the nuclear pore complex. NP comprises at least 2 nuclear localization signals that are responsible for the active RNP import into the nucleus through cellular importin alpha/beta pathway. Later in the infection, nclear export of RNPs are mediated through viral proteins NEP interacting with M1 which binds nucleoproteins. It is possible that nucleoprotein binds directly host exportin-1/XPO1 and plays an active role in RNPs nuclear export. M1 interaction with RNP seems to hide nucleoprotein's nuclear localization signals. Soon after a virion infects a new cell, M1 dissociates from the RNP under acidification of the virion driven by M2 protein. Dissociation of M1 from RNP unmasks nucleoprotein's nuclear localization signals, targeting the RNP to the nucleus. The chain is Nucleoprotein from Influenza A virus (strain A/New Jersey/8/1976 H1N1).